Here is a 441-residue protein sequence, read N- to C-terminus: Nucleoprotein (441 aa).

The residue at position 5 (Ser5) is a Phosphoserine; by host. Residues 14–136 (VPLSLYAPLR…QLPSVVEIVE (123 aa)) enclose the CoV N NTD domain. The RNA-binding stretch occupies residues 16–146 (LSLYAPLRVT…PNTPPASRAN (131 aa)). Disordered stretches follow at residues 131–219 (VVEI…VTSR) and 231–278 (KSLG…LKDI). At Ser143 the chain carries Phosphoserine; by host. Over residues 143–215 (SRANSRSRSR…NRNQSNDRGG (73 aa)) the composition is skewed to low complexity. Composition is skewed to basic and acidic residues over residues 238–255 (NPDR…KSDN) and 269–278 (TSKERDLKDI). The 117-residue stretch at 266–382 (SRATSKERDL…AFKTGNAKLQ (117 aa)) folds into the CoV N CTD domain. The dimerization stretch occupies residues 277–379 (DIPEWRRIPK…QVDAFKTGNA (103 aa)).

The protein belongs to the alphacoronavirus nucleocapsid protein family. As to quaternary structure, homooligomer. Both monomeric and oligomeric forms interact with RNA. Interacts with protein M. Interacts with NSP3; this interaction serves to tether the genome to the newly translated replicase-transcriptase complex at a very early stage of infection. Interacts with host RSAD2; this interaction inhibits viral replication. Post-translationally, ADP-ribosylated. The ADP-ribosylation is retained in the virion during infection. Phosphorylated on serine and threonine residues.

It localises to the virion. The protein localises to the host endoplasmic reticulum-Golgi intermediate compartment. Its subcellular location is the host Golgi apparatus. In terms of biological role, packages the positive strand viral genome RNA into a helical ribonucleocapsid (RNP) and plays a fundamental role during virion assembly through its interactions with the viral genome and membrane protein M. Plays an important role in enhancing the efficiency of subgenomic viral RNA transcription as well as viral replication. The polypeptide is Nucleoprotein (Porcine epidemic diarrhea virus (strain CV777) (PEDV)).